We begin with the raw amino-acid sequence, 598 residues long: NADH-quinone oxidoreductase subunit C/D (598 aa).

The segment at 1 to 189 is NADH dehydrogenase I subunit C; sequence MTDQIAQNSA…DPYVLTKQKE (189 aa). Positions 213-598 are NADH dehydrogenase I subunit D; the sequence is DFMFLNLGPN…IDFVMSDVDR (386 aa).

The protein in the N-terminal section; belongs to the complex I 30 kDa subunit family. In the C-terminal section; belongs to the complex I 49 kDa subunit family. NDH-1 is composed of 13 different subunits. Subunits NuoB, CD, E, F, and G constitute the peripheral sector of the complex.

It is found in the cell inner membrane. The catalysed reaction is a quinone + NADH + 5 H(+)(in) = a quinol + NAD(+) + 4 H(+)(out). In terms of biological role, NDH-1 shuttles electrons from NADH, via FMN and iron-sulfur (Fe-S) centers, to quinones in the respiratory chain. The immediate electron acceptor for the enzyme in this species is believed to be ubiquinone. Couples the redox reaction to proton translocation (for every two electrons transferred, four hydrogen ions are translocated across the cytoplasmic membrane), and thus conserves the redox energy in a proton gradient. The protein is NADH-quinone oxidoreductase subunit C/D of Proteus mirabilis (strain HI4320).